A 53-amino-acid polypeptide reads, in one-letter code: UPF0181 protein VC_A0569 (53 aa).

It belongs to the UPF0181 family.

The protein is UPF0181 protein VC_A0569 of Vibrio cholerae serotype O1 (strain ATCC 39315 / El Tor Inaba N16961).